Consider the following 210-residue polypeptide: 3-hexulose-6-phosphate synthase 3 (210 aa).

Belongs to the HPS/KGPDC family. HPS subfamily.

The enzyme catalyses D-ribulose 5-phosphate + formaldehyde = D-arabino-hex-3-ulose 6-phosphate. It functions in the pathway one-carbon metabolism; formaldehyde assimilation via RuMP pathway; D-fructose 6-phosphate from D-ribulose 5-phosphate and formaldehyde: step 1/2. In terms of biological role, catalyzes the condensation of ribulose 5-phosphate with formaldehyde to form 3-hexulose 6-phosphate. This is 3-hexulose-6-phosphate synthase 3 from Staphylococcus saprophyticus subsp. saprophyticus (strain ATCC 15305 / DSM 20229 / NCIMB 8711 / NCTC 7292 / S-41).